The chain runs to 122 residues: MKIILFLTLIALASCELYHYQECVRGTTVLLKEPCPSGTYEGNSPFHPLADNKFALTCTSTHFAFACADGTRHTYQLRARSVSPKLFIRQEEVHQELYSPLFLIVAALVFITLCFTIKRKTE.

The N-terminal stretch at 1 to 15 (MKIILFLTLIALASC) is a signal peptide. The region spanning 16 to 81 (ELYHYQECVR…RHTYQLRARS (66 aa)) is the X4e domain. At 16–96 (ELYHYQECVR…FIRQEEVHQE (81 aa)) the chain is on the virion surface side. Cystine bridges form between cysteine 23–cysteine 58 and cysteine 35–cysteine 67. A helical transmembrane segment spans residues 97-117 (LYSPLFLIVAALVFITLCFTI). Residues 118-122 (KRKTE) are Intravirion-facing. Residues 118–122 (KRKTE) carry the Di-lysine motif motif.

As to quaternary structure, interacts with the spike glycoprotein, M protein, E protein and the accessory protein 3.

It localises to the virion. The protein resides in the host endoplasmic reticulum membrane. It is found in the host endoplasmic reticulum-Golgi intermediate compartment membrane. Its subcellular location is the host Golgi apparatus membrane. Non-structural protein which is dispensable for virus replication in cell culture. The chain is Protein 7a from Bat coronavirus Rp3/2004 (BtCoV/Rp3/2004).